Reading from the N-terminus, the 190-residue chain is Calcium-binding protein NCS-1 (190 aa).

Gly2 carries the N-myristoyl glycine lipid modification. EF-hand domains lie at 40–58 (SGHL…FFPF), 60–95 (DPSA…TSRG), 96–131 (ELND…IYKM), and 144–179 (TPEK…DPTI). Residues Asp73, Asp75, Asn77, Tyr79, Glu84, Asp109, Asp111, Asn113, Glu120, Asp157, Asn159, Asp161, Gln163, and Glu168 each coordinate Ca(2+).

The protein belongs to the recoverin family.

The protein resides in the membrane. Functionally, negatively regulates sporulation perhaps by controlling Ca(2+)-dependent desensitization of git3. This is Calcium-binding protein NCS-1 (ncs1) from Schizosaccharomyces pombe (strain 972 / ATCC 24843) (Fission yeast).